A 132-amino-acid chain; its full sequence is Histone H2B.2 (132 aa).

Residues 1–19 (MAPKAEKKPASKAPAEKKP) show a composition bias toward basic and acidic residues. The interval 1–39 (MAPKAEKKPASKAPAEKKPAAKKTSSSVDPSKKRTKARK) is disordered. An N6-acetyllysine; alternate mark is found at Lys-7 and Lys-8. Residues Lys-7 and Lys-8 each participate in a glycyl lysine isopeptide (Lys-Gly) (interchain with G-Cter in SUMO); alternate cross-link. Position 11 is a phosphoserine (Ser-11). Lys-12 carries the post-translational modification N6-acetyllysine. Lys-17 bears the N6-acetyllysine; alternate mark. Lys-17 participates in a covalent cross-link: Glycyl lysine isopeptide (Lys-Gly) (interchain with G-Cter in SUMO); alternate. Residue Lys-18 forms a Glycyl lysine isopeptide (Lys-Gly) (interchain with G-Cter in SUMO) linkage. Residue Lys-125 forms a Glycyl lysine isopeptide (Lys-Gly) (interchain with G-Cter in ubiquitin) linkage.

The protein belongs to the histone H2B family. The nucleosome is a histone octamer containing two molecules each of H2A, H2B, H3 and H4 assembled in one H3-H4 heterotetramer and two H2A-H2B heterodimers. The octamer wraps approximately 147 bp of DNA. Monoubiquitinated by the UBC2-BRE1 complex to form H2BK123ub1. H2BK123ub1 gives a specific tag for epigenetic transcriptional activation and is also prerequisite for H3K4me and H3K79me formation. H2BK123ub1 also modulates the formation of double-strand breaks during meiosis and is a prerequisite for DNA-damage checkpoint activation. In terms of processing, phosphorylated by STE20 to form H2BS10ph during progression through meiotic prophase. May be correlated with chromosome condensation. Post-translationally, acetylated by GCN5 to form H2BK11ac and H2BK16ac. H2BK16ac can also be formed by ESA1. Acetylation of N-terminal lysines and particularly formation of H2BK11acK16ac has a positive effect on transcription. Sumoylation to form H2BK6su or H2BK7su, and probably also H2BK16su or H2BK17su, occurs preferentially near the telomeres and represses gene transcription.

The protein localises to the nucleus. It is found in the chromosome. Core component of nucleosome. Nucleosomes wrap and compact DNA into chromatin, limiting DNA accessibility to the cellular machineries which require DNA as a template. Histones thereby play a central role in transcription regulation, DNA repair, DNA replication and chromosomal stability. DNA accessibility is regulated via a complex set of post-translational modifications of histones, also called histone code, and nucleosome remodeling. This chain is Histone H2B.2 (HTB1), found in Kluyveromyces lactis (strain ATCC 8585 / CBS 2359 / DSM 70799 / NBRC 1267 / NRRL Y-1140 / WM37) (Yeast).